The chain runs to 2788 residues: E3 ubiquitin-protein ligase UBR5 (2788 aa).

The segment covering 68-78 has biased composition (basic and acidic residues); the sequence is RLELGKPDNND. Positions 68-165 are disordered; that stretch reads RLELGKPDNN…DRGSGLLGSQ (98 aa). Positions 84 to 101 are enriched in low complexity; sequence SSSGTGRTSRPGRTSDSP. Residue Ser-100 is modified to Phosphoserine. The segment covering 125–134 has biased composition (gly residues); it reads GVGGSGGGSS. Residues 174-216 form the UBA domain; sequence VIPEELISQAQVVLQGKSRSVIIRELQRTNLDVNLAVNNLLSR. Ser-317 carries the phosphoserine modification. The span at 318-337 shows a compositional bias: basic and acidic residues; it reads FDNERGSTSKEGEPNPDKKN. Positions 318–343 are disordered; the sequence is FDNERGSTSKEGEPNPDKKNTPVQSP. Phosphoserine occurs at positions 342 and 567. The segment covering 572–593 has biased composition (basic and acidic residues); that stretch reads KSMEKASKTIETKPESKQEPVK. Residues 572–636 form a disordered region; it reads KSMEKASKTI…PAPKEEEKVN (65 aa). Ser-601 carries the post-translational modification Phosphoserine. Over residues 603 to 617 the composition is skewed to low complexity; it reads ASTCSDASSIASSAS. Residue Thr-626 is modified to Phosphothreonine. Residues Ser-797, Ser-917, and Ser-1007 each carry the phosphoserine modification. 2 disordered regions span residues 988-1024 and 1041-1064; these read AGLGRHEAGASSSDHQDPVSPPIAPPSWVPDPPSMDP and TAATGGGQGPSTSTIPGPSTEPSV. The span at 1006–1022 shows a compositional bias: pro residues; the sequence is VSPPIAPPSWVPDPPSM. Residues 1050-1062 are compositionally biased toward polar residues; the sequence is PSTSTIPGPSTEP. Residues Thr-1104 and Thr-1124 each carry the phosphothreonine modification. A UBR-type zinc finger spans residues 1166-1234; the sequence is DTCSFTWTGA…EKCKCKTLIA (69 aa). A phosphoserine mark is found at Ser-1216, Ser-1297, Ser-1344, Ser-1364, and Ser-1470. The tract at residues 1288–1308 is disordered; the sequence is REDRNRKTASPDDSDMPDHDL. The disordered stretch occupies residues 1504 to 1729; it reads SVEPLPPRPS…PSSTSTPAAS (226 aa). The span at 1513-1526 shows a compositional bias: low complexity; the sequence is SSDQSSSSSQSQSS. Polar residues predominate over residues 1527–1542; it reads YIIRNPQQRRISQSQP. Residue Ser-1538 is modified to Phosphoserine. Acidic residues-rich tracts occupy residues 1548-1563 and 1594-1603; these read EEQDDIVSADVEEVEV and HDEDGSDMEL. Positions 1618–1627 are enriched in polar residues; the sequence is NHSNQDNASG. 3 stretches are compositionally biased toward low complexity: residues 1630–1646, 1657–1670, and 1715–1729; these read SVVTAATAGSEAGASSV, SNDSSDSDSSSSQS, and AASTAPSSTSTPAAS. Position 1725 is a phosphothreonine (Thr-1725). Ser-1730 carries the post-translational modification Phosphoserine. Tyr-1735 carries the post-translational modification Phosphotyrosine. Ser-1769 carries the phosphoserine modification. The disordered stretch occupies residues 1848–1881; sequence LASAGDPGHPNHPLHASQNSARRERMTAREEASL. Residues 1868-1881 are compositionally biased toward basic and acidic residues; the sequence is ARRERMTAREEASL. Position 1959 is a phosphothreonine (Thr-1959). Positions 1974-2011 are disordered; it reads GIDNEDSEHENDDDTSQSATLNDKDDESLPAETGQNHP. The segment covering 1975–1988 has biased composition (acidic residues); the sequence is IDNEDSEHENDDDT. 3 positions are modified to phosphoserine: Ser-1980, Ser-2016, and Ser-2018. The residue at position 2020 (Thr-2020) is a Phosphothreonine. Residue Ser-2066 is modified to Phosphoserine. The tract at residues 2106 to 2132 is disordered; the sequence is NRQKKAGEDQSMLAEEADSSKPGPSAH. At Thr-2203 the chain carries Phosphothreonine. Ser-2231 and Ser-2279 each carry phosphoserine. Residues 2313-2383 are disordered; the sequence is HTSLMQRLRN…SDDPDPLPAH (71 aa). 2 stretches are compositionally biased toward basic and acidic residues: residues 2322-2338 and 2346-2358; these read NRGERDREREREREMRR and SRRDRDRDFRRQL. The region spanning 2367–2444 is the PABC domain; it reads PASEGNPSDD…AMELIVAHGR (78 aa). The HECT domain occupies 2451–2788; the sequence is ILDLGLLDSS…AIKTKNFGFV (338 aa). Phosphoserine occurs at positions 2459, 2473, and 2475. Residues 2463 to 2490 are disordered; the sequence is VQENRKRHGSSRSVVDMDLDDTDDGDDN. Residues 2479–2489 show a composition bias toward acidic residues; sequence MDLDDTDDGDD. Cys-2757 acts as the Glycyl thioester intermediate in catalysis.

Belongs to the UBR5 family. Homotetramer; composed of a dimer of dimers. Associates with CDK9 and TFIIS/TCEA1 and forms a transcription regulatory complex made of CDK9, RNAP II, UBR5 and TFIIS/TCEA1 that can stimulate target gene transcription (e.g. gamma fibrinogen/FGG) by recruiting their promoters. Associates with the E3 ligase complex containing DYRK2, EDD/UBR5, DDB1 and DCAF1 proteins (EDVP complex). Binds TOPBP1. Interacts with PIH1D1. Interacts with CIB1. In terms of tissue distribution, highest levels found in testis. Also present in liver, kidney, lung and brain.

Its subcellular location is the nucleus. It is found in the cytoplasm. The enzyme catalyses S-ubiquitinyl-[E2 ubiquitin-conjugating enzyme]-L-cysteine + [acceptor protein]-L-lysine = [E2 ubiquitin-conjugating enzyme]-L-cysteine + N(6)-ubiquitinyl-[acceptor protein]-L-lysine.. The protein operates within protein modification; protein ubiquitination. Functionally, E3 ubiquitin-protein ligase involved in different protein quality control pathways in the cytoplasm and nucleus. Mainly acts as a ubiquitin chain elongator that extends pre-ubiquitinated substrates. Component of the N-end rule pathway: ubiquitinates proteins bearing specific N-terminal residues that are destabilizing according to the N-end rule, leading to their degradation. Recognizes type-1 N-degrons, containing positively charged amino acids (Arg, Lys and His). Together with UBR4, part of a cytoplasm protein quality control pathway that prevents protein aggregation by catalyzing assembly of heterotypic 'Lys-11'-/'Lys-48'-linked branched ubiquitin chains on aggregated proteins, leading to substrate recognition by the segregase p97/VCP and degradation by the proteasome: UBR5 is probably branching multiple 'Lys-48'-linked chains of substrates initially modified with mixed conjugates by UBR4. Together with ITCH, catalyzes 'Lys-48'-/'Lys-63'-branched ubiquitination of TXNIP, leading to its degradation: UBR5 mediates branching of 'Lys-48'-linked chains of substrates initially modified with 'Lys-63'-linked conjugates by ITCH. Catalytic component of a nuclear protein quality control pathway that mediates ubiquitination and degradation of unpaired transcription factors (i.e. transcription factors that are not assembled into functional multiprotein complexes): specifically recognizes and binds degrons that are not accessible when transcription regulators are associated with their coactivators. Ubiquitinates various unpaired transcription regulator (MYC, SUPT4H1, SUPT5H, CDC20 and MCRS1), as well as ligand-bound nuclear receptors (ESR1, NR1H3, NR3C1, PGR, RARA, RXRA AND VDR) that are not associated with their nuclear receptor coactivators (NCOAs). Involved in maturation and/or transcriptional regulation of mRNA by mediating polyubiquitination and activation of CDK9. Also acts as a regulator of DNA damage response by acting as a suppressor of RNF168, an E3 ubiquitin-protein ligase that promotes accumulation of 'Lys-63'-linked histone H2A and H2AX at DNA damage sites, thereby acting as a guard against excessive spreading of ubiquitinated chromatin at damaged chromosomes. Regulates DNA topoisomerase II binding protein (TopBP1) in the DNA damage response. Ubiquitinates acetylated PCK1. Acts as a positive regulator of the canonical Wnt signaling pathway by mediating (1) ubiquitination and stabilization of CTNNB1, and (2) 'Lys-48'-linked ubiquitination and degradation of TLE3. Promotes disassembly of the mitotic checkpoint complex (MCC) from the APC/C complex by catalyzing ubiquitination of BUB1B, BUB3 and CDC20. Plays an essential role in extraembryonic development. Required for the maintenance of skeletal tissue homeostasis by acting as an inhibitor of hedgehog (HH) signaling. The polypeptide is E3 ubiquitin-protein ligase UBR5 (Ubr5) (Rattus norvegicus (Rat)).